The chain runs to 212 residues: Ribonuclease HII (212 aa).

Positions 1-206 (MICGVDEAGK…VKNLLHQKNQ (206 aa)) constitute an RNase H type-2 domain. A divalent metal cation-binding residues include D6, E7, and D101.

Belongs to the RNase HII family. Mn(2+) serves as cofactor. It depends on Mg(2+) as a cofactor.

It is found in the cytoplasm. The catalysed reaction is Endonucleolytic cleavage to 5'-phosphomonoester.. Its function is as follows. Endonuclease that specifically degrades the RNA of RNA-DNA hybrids. This is Ribonuclease HII from Methanospirillum hungatei JF-1 (strain ATCC 27890 / DSM 864 / NBRC 100397 / JF-1).